The sequence spans 78 residues: Acyl carrier protein (78 aa).

The 76-residue stretch at 2–77 (SDIEQRVKKI…QAIDYVNANL (76 aa)) folds into the Carrier domain. O-(pantetheine 4'-phosphoryl)serine is present on serine 37.

This sequence belongs to the acyl carrier protein (ACP) family. Post-translationally, 4'-phosphopantetheine is transferred from CoA to a specific serine of apo-ACP by AcpS. This modification is essential for activity because fatty acids are bound in thioester linkage to the sulfhydryl of the prosthetic group.

It is found in the cytoplasm. It functions in the pathway lipid metabolism; fatty acid biosynthesis. In terms of biological role, carrier of the growing fatty acid chain in fatty acid biosynthesis. In Methylobacillus flagellatus (strain ATCC 51484 / DSM 6875 / VKM B-1610 / KT), this protein is Acyl carrier protein.